Consider the following 427-residue polypeptide: tRNA(Ile)-lysidine synthase (427 aa).

25 to 30 (SGGLDS) contributes to the ATP binding site.

It belongs to the tRNA(Ile)-lysidine synthase family.

It is found in the cytoplasm. It carries out the reaction cytidine(34) in tRNA(Ile2) + L-lysine + ATP = lysidine(34) in tRNA(Ile2) + AMP + diphosphate + H(+). In terms of biological role, ligates lysine onto the cytidine present at position 34 of the AUA codon-specific tRNA(Ile) that contains the anticodon CAU, in an ATP-dependent manner. Cytidine is converted to lysidine, thus changing the amino acid specificity of the tRNA from methionine to isoleucine. The chain is tRNA(Ile)-lysidine synthase from Histophilus somni (strain 129Pt) (Haemophilus somnus).